Here is a 450-residue protein sequence, read N- to C-terminus: Serine--tRNA ligase, cytoplasmic (450 aa).

L-serine is bound at residue T238–E240. ATP-binding positions include R271–E273 and V287. L-serine is bound at residue E294. Residue E358–S361 participates in ATP binding. T396 contacts L-serine.

The protein belongs to the class-II aminoacyl-tRNA synthetase family. Type-1 seryl-tRNA synthetase subfamily. Homodimer. The tRNA molecule binds across the dimer.

Its subcellular location is the cytoplasm. The protein localises to the cytosol. It carries out the reaction tRNA(Ser) + L-serine + ATP = L-seryl-tRNA(Ser) + AMP + diphosphate + H(+). Its function is as follows. Catalyzes the attachment of serine to tRNA(Ser) in a two-step reaction: serine is first activated by ATP to form Ser-AMP and then transferred to the acceptor end of tRNA(Ser). In Schizosaccharomyces pombe (strain 972 / ATCC 24843) (Fission yeast), this protein is Serine--tRNA ligase, cytoplasmic.